The chain runs to 91 residues: Acylphosphatase (91 aa).

An Acylphosphatase-like domain is found at 3–91 (TVTMRVTGLV…EKFTRFSVVY (89 aa)). Residues arginine 18 and asparagine 36 contribute to the active site.

This sequence belongs to the acylphosphatase family.

It catalyses the reaction an acyl phosphate + H2O = a carboxylate + phosphate + H(+). The sequence is that of Acylphosphatase (acyP) from Lactobacillus johnsonii (strain CNCM I-12250 / La1 / NCC 533).